The chain runs to 312 residues: MGLRDSEALKPLAVLIAGPTASGKSALALDLAERTDGVIINADSMQVYGDLRILTARPSPEEEMRVPHRLYGHVDGAADYSVARWIADAAAAMATARAEGRLPIVIGGTGLYFRALTRGLAPIPEIPEEVRQRVRRMAEDEVTVVLHARLATRDPEAAVRLQPQDRQRILRALEVFEATGQPLSQWQRATHRPVLEEASAVRFVLEVERETLRGRIDRRFETMMEAGALAEVERLAARELPADRTILKAHGAPALTRYLRGEMSRADAIAEGQNDTRRYAKRQVTWFRHQMPDWMRGTPDTALDQLTGTLRL.

18 to 25 (GPTASGKS) provides a ligand contact to ATP. A substrate-binding site is contributed by 20-25 (TASGKS). Interaction with substrate tRNA regions lie at residues 43–46 (DSMQ) and 167–171 (QRILR).

The protein belongs to the IPP transferase family. In terms of assembly, monomer. Requires Mg(2+) as cofactor.

The enzyme catalyses adenosine(37) in tRNA + dimethylallyl diphosphate = N(6)-dimethylallyladenosine(37) in tRNA + diphosphate. Functionally, catalyzes the transfer of a dimethylallyl group onto the adenine at position 37 in tRNAs that read codons beginning with uridine, leading to the formation of N6-(dimethylallyl)adenosine (i(6)A). The protein is tRNA dimethylallyltransferase of Azorhizobium caulinodans (strain ATCC 43989 / DSM 5975 / JCM 20966 / LMG 6465 / NBRC 14845 / NCIMB 13405 / ORS 571).